The sequence spans 1441 residues: Gag-Pol polyprotein (1441 aa).

G2 is lipidated: N-myristoyl glycine; by host. The segment at 7-31 is interaction with Gp41; it reads VLSGGELDRWENIRLRPGGKKKYKL. Residues 8–43 are interaction with host CALM1; that stretch reads LSGGELDRWENIRLRPGGKKKYKLKHVVWASRELER. An interaction with host AP3D1 region spans residues 12–19; that stretch reads ELDRWENI. Residues 14–33 are interaction with membrane phosphatidylinositol 4,5-bisphosphate and RNA; it reads DRWENIRLRPGGKKKYKLKH. The short motif at 16-22 is the Nuclear export signal element; it reads WENIRLR. The Nuclear localization signal signature appears at 26-32; the sequence is KKKYKLK. An interaction with membrane phosphatidylinositol 4,5-bisphosphate region spans residues 73–77; sequence EELKS. The tract at residues 106-131 is disordered; that stretch reads EEQNKSKKKAQQAAADTGNRGNSSQV. Y135 is modified (phosphotyrosine; by host). The interval 192–230 is interaction with human PPIA/CYPA and NUP153; sequence NTVGGHQAAMQMLKETINEEAAEWDRLHPVHAGPITPGQ. The tract at residues 280–366 is dimerization/Multimerization of capsid protein p24; sequence YSPSSILDIR…GGPGHKARVL (87 aa). 2 CCHC-type zinc fingers span residues 393-410 and 414-431; these read IKCFNCGKEGHIAKNCRA and RGCWKCGKEGHQMKDCTE. Polar residues predominate over residues 451–460; the sequence is SSEQNRANSP. The disordered stretch occupies residues 451-489; sequence SSEQNRANSPTRRELQVWGRDNNSLSEAGEEAGDDRQGP. Residues 495-499 are dimerization of protease; sequence PQITL. Residues 514 to 583 enclose the Peptidase A2 domain; it reads KEALLDTGAD…TPVNIIGRNL (70 aa). D519 serves as the catalytic For protease activity; shared with dimeric partner. Dimerization of protease stretches follow at residues 543-549 and 582-594; these read GIGGFIK and NLLTQLGCTLNFP. A Reverse transcriptase domain is found at 637–827; that stretch reads EGKISKIGPE…PPFLWMGYEL (191 aa). Mg(2+) is bound by residues D703, D778, and D779. Positions 820-828 are RT 'primer grip'; the sequence is FLWMGYELH. The short motif at 991 to 1007 is the Tryptophan repeat motif element; it reads WETWWTEYTXATWIPEW. Positions 1027-1150 constitute an RNase H type-1 domain; that stretch reads IVGAETFYVD…VDKLVSAGIR (124 aa). Residues D1036, E1071, D1091, and D1142 each contribute to the Mg(2+) site. The segment at 1156–1197 adopts an Integrase-type zinc-finger fold; that stretch reads DGIDKAQEDHEKYHSNWRAMASDFNLPPIVAKEIVASCDKCQ. H1165, H1169, C1193, and C1196 together coordinate Zn(2+). The region spanning 1207–1357 is the Integrase catalytic domain; sequence VDCSPGIWQL…SAGERIVGII (151 aa). Residues D1217, D1269, and E1305 each coordinate Mg(2+). Residues 1376–1423 constitute a DNA-binding region (integrase-type); that stretch reads FRVYYRDSRDPLWKGPAKLLWKGEGAVVIQDNNDIKVVPRRKAKVIRD.

In terms of assembly, homotrimer; further assembles as hexamers of trimers. Interacts with gp41 (via C-terminus). Interacts with host CALM1; this interaction induces a conformational change in the Matrix protein, triggering exposure of the myristate group. Interacts with host AP3D1; this interaction allows the polyprotein trafficking to multivesicular bodies during virus assembly. Part of the pre-integration complex (PIC) which is composed of viral genome, matrix protein, Vpr and integrase. As to quaternary structure, homodimer; the homodimer further multimerizes as homohexamers or homopentamers. Interacts with human PPIA/CYPA; This interaction stabilizes the capsid. Interacts with human NUP153. Interacts with host PDZD8; this interaction stabilizes the capsid. Interacts with monkey TRIM5; this interaction destabilizes the capsid. Homodimer, whose active site consists of two apposed aspartic acid residues. In terms of assembly, heterodimer of p66 RT and p51 RT (RT p66/p51). Heterodimerization of RT is essential for DNA polymerase activity. The overall folding of the subdomains is similar in p66 RT and p51 RT but the spatial arrangements of the subdomains are dramatically different. As to quaternary structure, homotetramer; may further associate as a homohexadecamer. Part of the pre-integration complex (PIC) which is composed of viral genome, matrix protein, Vpr and integrase. Interacts with human SMARCB1/INI1 and human PSIP1/LEDGF isoform 1. Interacts with human KPNA3; this interaction might play a role in nuclear import of the pre-integration complex. Interacts with human NUP153; this interaction might play a role in nuclear import of the pre-integration complex. Requires Mg(2+) as cofactor. Post-translationally, specific enzymatic cleavages by the viral protease yield mature proteins. The protease is released by autocatalytic cleavage. The polyprotein is cleaved during and after budding, this process is termed maturation. Proteolytic cleavage of p66 RT removes the RNase H domain to yield the p51 RT subunit. Nucleocapsid protein p7 might be further cleaved after virus entry. In terms of processing, tyrosine phosphorylated presumably in the virion by a host kinase. Phosphorylation is apparently not a major regulator of membrane association. Phosphorylated possibly by host MAPK1; this phosphorylation is necessary for Pin1-mediated virion uncoating. Post-translationally, methylated by host PRMT6, impairing its function by reducing RNA annealing and the initiation of reverse transcription.

It localises to the host cell membrane. The protein resides in the host endosome. Its subcellular location is the host multivesicular body. It is found in the virion membrane. The protein localises to the host nucleus. It localises to the host cytoplasm. The protein resides in the virion. The enzyme catalyses Specific for a P1 residue that is hydrophobic, and P1' variable, but often Pro.. The catalysed reaction is Endohydrolysis of RNA in RNA/DNA hybrids. Three different cleavage modes: 1. sequence-specific internal cleavage of RNA. Human immunodeficiency virus type 1 and Moloney murine leukemia virus enzymes prefer to cleave the RNA strand one nucleotide away from the RNA-DNA junction. 2. RNA 5'-end directed cleavage 13-19 nucleotides from the RNA end. 3. DNA 3'-end directed cleavage 15-20 nucleotides away from the primer terminus.. It catalyses the reaction 3'-end directed exonucleolytic cleavage of viral RNA-DNA hybrid.. It carries out the reaction DNA(n) + a 2'-deoxyribonucleoside 5'-triphosphate = DNA(n+1) + diphosphate. Its activity is regulated as follows. Protease: The viral protease is inhibited by many synthetic protease inhibitors (PIs), such as amprenavir, atazanavir, indinavir, loprinavir, nelfinavir, ritonavir and saquinavir. Use of protease inhibitors in tritherapy regimens permit more ambitious therapeutic strategies. Reverse transcriptase/ribonuclease H: RT can be inhibited either by nucleoside RT inhibitors (NRTIs) or by non nucleoside RT inhibitors (NNRTIs). NRTIs act as chain terminators, whereas NNRTIs inhibit DNA polymerization by binding a small hydrophobic pocket near the RT active site and inducing an allosteric change in this region. Classical NRTIs are abacavir, adefovir (PMEA), didanosine (ddI), lamivudine (3TC), stavudine (d4T), tenofovir (PMPA), zalcitabine (ddC), and zidovudine (AZT). Classical NNRTIs are atevirdine (BHAP U-87201E), delavirdine, efavirenz (DMP-266), emivirine (I-EBU), and nevirapine (BI-RG-587). The tritherapies used as a basic effective treatment of AIDS associate two NRTIs and one NNRTI. Functionally, mediates, with Gag polyprotein, the essential events in virion assembly, including binding the plasma membrane, making the protein-protein interactions necessary to create spherical particles, recruiting the viral Env proteins, and packaging the genomic RNA via direct interactions with the RNA packaging sequence (Psi). Gag-Pol polyprotein may regulate its own translation, by the binding genomic RNA in the 5'-UTR. At low concentration, the polyprotein would promote translation, whereas at high concentration, the polyprotein would encapsidate genomic RNA and then shut off translation. Its function is as follows. Targets the polyprotein to the plasma membrane via a multipartite membrane-binding signal, that includes its myristoylated N-terminus. Matrix protein is part of the pre-integration complex. Implicated in the release from host cell mediated by Vpu. Binds to RNA. Forms the conical core that encapsulates the genomic RNA-nucleocapsid complex in the virion. Most core are conical, with only 7% tubular. The core is constituted by capsid protein hexamer subunits. The core is disassembled soon after virion entry. Host restriction factors such as TRIM5-alpha or TRIMCyp bind retroviral capsids and cause premature capsid disassembly, leading to blocks in reverse transcription. Capsid restriction by TRIM5 is one of the factors which restricts HIV-1 to the human species. Host PIN1 apparently facilitates the virion uncoating. On the other hand, interactions with PDZD8 or CYPA stabilize the capsid. In terms of biological role, encapsulates and protects viral dimeric unspliced genomic RNA (gRNA). Binds these RNAs through its zinc fingers. Acts as a nucleic acid chaperone which is involved in rearangement of nucleic acid secondary structure during gRNA retrotranscription. Also facilitates template switch leading to recombination. As part of the polyprotein, participates in gRNA dimerization, packaging, tRNA incorporation and virion assembly. Functionally, aspartyl protease that mediates proteolytic cleavages of Gag and Gag-Pol polyproteins during or shortly after the release of the virion from the plasma membrane. Cleavages take place as an ordered, step-wise cascade to yield mature proteins. This process is called maturation. Displays maximal activity during the budding process just prior to particle release from the cell. Also cleaves Nef and Vif, probably concomitantly with viral structural proteins on maturation of virus particles. Hydrolyzes host EIF4GI and PABP1 in order to shut off the capped cellular mRNA translation. The resulting inhibition of cellular protein synthesis serves to ensure maximal viral gene expression and to evade host immune response. Also mediates cleavage of host YTHDF3. Mediates cleavage of host CARD8, thereby activating the CARD8 inflammasome, leading to the clearance of latent HIV-1 in patient CD4(+) T-cells after viral reactivation; in contrast, HIV-1 can evade CARD8-sensing when its protease remains inactive in infected cells prior to viral budding. Its function is as follows. Multifunctional enzyme that converts the viral RNA genome into dsDNA in the cytoplasm, shortly after virus entry into the cell. This enzyme displays a DNA polymerase activity that can copy either DNA or RNA templates, and a ribonuclease H (RNase H) activity that cleaves the RNA strand of RNA-DNA heteroduplexes in a partially processive 3' to 5' endonucleasic mode. Conversion of viral genomic RNA into dsDNA requires many steps. A tRNA(3)-Lys binds to the primer-binding site (PBS) situated at the 5'-end of the viral RNA. RT uses the 3' end of the tRNA primer to perform a short round of RNA-dependent minus-strand DNA synthesis. The reading proceeds through the U5 region and ends after the repeated (R) region which is present at both ends of viral RNA. The portion of the RNA-DNA heteroduplex is digested by the RNase H, resulting in a ssDNA product attached to the tRNA primer. This ssDNA/tRNA hybridizes with the identical R region situated at the 3' end of viral RNA. This template exchange, known as minus-strand DNA strong stop transfer, can be either intra- or intermolecular. RT uses the 3' end of this newly synthesized short ssDNA to perform the RNA-dependent minus-strand DNA synthesis of the whole template. RNase H digests the RNA template except for two polypurine tracts (PPTs) situated at the 5'-end and near the center of the genome. It is not clear if both polymerase and RNase H activities are simultaneous. RNase H probably can proceed both in a polymerase-dependent (RNA cut into small fragments by the same RT performing DNA synthesis) and a polymerase-independent mode (cleavage of remaining RNA fragments by free RTs). Secondly, RT performs DNA-directed plus-strand DNA synthesis using the PPTs that have not been removed by RNase H as primers. PPTs and tRNA primers are then removed by RNase H. The 3' and 5' ssDNA PBS regions hybridize to form a circular dsDNA intermediate. Strand displacement synthesis by RT to the PBS and PPT ends produces a blunt ended, linear dsDNA copy of the viral genome that includes long terminal repeats (LTRs) at both ends. Catalyzes viral DNA integration into the host chromosome, by performing a series of DNA cutting and joining reactions. This enzyme activity takes place after virion entry into a cell and reverse transcription of the RNA genome in dsDNA. The first step in the integration process is 3' processing. This step requires a complex comprising the viral genome, matrix protein, Vpr and integrase. This complex is called the pre-integration complex (PIC). The integrase protein removes 2 nucleotides from each 3' end of the viral DNA, leaving recessed CA OH's at the 3' ends. In the second step, the PIC enters cell nucleus. This process is mediated through integrase and Vpr proteins, and allows the virus to infect a non dividing cell. This ability to enter the nucleus is specific of lentiviruses, other retroviruses cannot and rely on cell division to access cell chromosomes. In the third step, termed strand transfer, the integrase protein joins the previously processed 3' ends to the 5' ends of strands of target cellular DNA at the site of integration. The 5'-ends are produced by integrase-catalyzed staggered cuts, 5 bp apart. A Y-shaped, gapped, recombination intermediate results, with the 5'-ends of the viral DNA strands and the 3' ends of target DNA strands remaining unjoined, flanking a gap of 5 bp. The last step is viral DNA integration into host chromosome. This involves host DNA repair synthesis in which the 5 bp gaps between the unjoined strands are filled in and then ligated. Since this process occurs at both cuts flanking the HIV genome, a 5 bp duplication of host DNA is produced at the ends of HIV-1 integration. Alternatively, Integrase may catalyze the excision of viral DNA just after strand transfer, this is termed disintegration. The sequence is that of Gag-Pol polyprotein (gag-pol) from Human immunodeficiency virus type 1 group M subtype B (isolate MN) (HIV-1).